Reading from the N-terminus, the 692-residue chain is Chaperone protein dnaK1 (692 aa).

Threonine 197 is subject to Phosphothreonine; by autocatalysis.

It belongs to the heat shock protein 70 family.

Acts as a chaperone. This chain is Chaperone protein dnaK1 (dnaK1), found in Synechocystis sp. (strain ATCC 27184 / PCC 6803 / Kazusa).